The primary structure comprises 142 residues: Peptide methionine sulfoxide reductase MsrB (142 aa).

A MsrB domain is found at 3 to 126 (KEELKKKLSP…NSAALRFIPF (124 aa)). Catalysis depends on Cys-115, which acts as the Nucleophile.

It belongs to the MsrB Met sulfoxide reductase family.

It carries out the reaction L-methionyl-[protein] + [thioredoxin]-disulfide + H2O = L-methionyl-(R)-S-oxide-[protein] + [thioredoxin]-dithiol. The sequence is that of Peptide methionine sulfoxide reductase MsrB from Lactococcus lactis subsp. cremoris (strain SK11).